The following is a 120-amino-acid chain: Aspartate 1-decarboxylase (120 aa).

Serine 25 acts as the Schiff-base intermediate with substrate; via pyruvic acid in catalysis. Serine 25 bears the Pyruvic acid (Ser) mark. Threonine 57 is a binding site for substrate. Catalysis depends on tyrosine 58, which acts as the Proton donor. 73-75 provides a ligand contact to substrate; the sequence is GAA.

Belongs to the PanD family. In terms of assembly, heterooctamer of four alpha and four beta subunits. It depends on pyruvate as a cofactor. Post-translationally, is synthesized initially as an inactive proenzyme, which is activated by self-cleavage at a specific serine bond to produce a beta-subunit with a hydroxyl group at its C-terminus and an alpha-subunit with a pyruvoyl group at its N-terminus.

Its subcellular location is the cytoplasm. It catalyses the reaction L-aspartate + H(+) = beta-alanine + CO2. It participates in cofactor biosynthesis; (R)-pantothenate biosynthesis; beta-alanine from L-aspartate: step 1/1. Functionally, catalyzes the pyruvoyl-dependent decarboxylation of aspartate to produce beta-alanine. This Polynucleobacter asymbioticus (strain DSM 18221 / CIP 109841 / QLW-P1DMWA-1) (Polynucleobacter necessarius subsp. asymbioticus) protein is Aspartate 1-decarboxylase.